A 398-amino-acid polypeptide reads, in one-letter code: Succinyl-diaminopimelate desuccinylase (398 aa).

His68 contributes to the Zn(2+) binding site. The active site involves Asp70. Zn(2+) is bound at residue Asp101. The Proton acceptor role is filled by Glu135. Glu136, Glu164, and His349 together coordinate Zn(2+).

This sequence belongs to the peptidase M20A family. DapE subfamily. In terms of assembly, homodimer. Requires Zn(2+) as cofactor. The cofactor is Co(2+).

The enzyme catalyses N-succinyl-(2S,6S)-2,6-diaminopimelate + H2O = (2S,6S)-2,6-diaminopimelate + succinate. Its pathway is amino-acid biosynthesis; L-lysine biosynthesis via DAP pathway; LL-2,6-diaminopimelate from (S)-tetrahydrodipicolinate (succinylase route): step 3/3. In terms of biological role, catalyzes the hydrolysis of N-succinyl-L,L-diaminopimelic acid (SDAP), forming succinate and LL-2,6-diaminopimelate (DAP), an intermediate involved in the bacterial biosynthesis of lysine and meso-diaminopimelic acid, an essential component of bacterial cell walls. This chain is Succinyl-diaminopimelate desuccinylase, found in Wolbachia pipientis wMel.